We begin with the raw amino-acid sequence, 187 residues long: dTTP/UTP pyrophosphatase (187 aa).

D64 acts as the Proton acceptor in catalysis.

Belongs to the Maf family. YhdE subfamily. Requires a divalent metal cation as cofactor.

It localises to the cytoplasm. The enzyme catalyses dTTP + H2O = dTMP + diphosphate + H(+). It catalyses the reaction UTP + H2O = UMP + diphosphate + H(+). Its function is as follows. Nucleoside triphosphate pyrophosphatase that hydrolyzes dTTP and UTP. May have a dual role in cell division arrest and in preventing the incorporation of modified nucleotides into cellular nucleic acids. The polypeptide is dTTP/UTP pyrophosphatase (Leptospira interrogans serogroup Icterohaemorrhagiae serovar Lai (strain 56601)).